The sequence spans 449 residues: tRNA-2-methylthio-N(6)-dimethylallyladenosine synthase (449 aa).

One can recognise an MTTase N-terminal domain in the interval 13 to 128 (RRIFIETYGC…LPHLIGTVEK (116 aa)). Residues cysteine 22, cysteine 58, cysteine 92, cysteine 166, cysteine 170, and cysteine 173 each contribute to the [4Fe-4S] cluster site. Residues 152-383 (SRIKISGFIS…ITLQLKISLM (232 aa)) enclose the Radical SAM core domain. A TRAM domain is found at 386–449 (KENIGKTMEI…AATLFGDPKL (64 aa)).

This sequence belongs to the methylthiotransferase family. MiaB subfamily. Monomer. Requires [4Fe-4S] cluster as cofactor.

It is found in the cytoplasm. The enzyme catalyses N(6)-dimethylallyladenosine(37) in tRNA + (sulfur carrier)-SH + AH2 + 2 S-adenosyl-L-methionine = 2-methylsulfanyl-N(6)-dimethylallyladenosine(37) in tRNA + (sulfur carrier)-H + 5'-deoxyadenosine + L-methionine + A + S-adenosyl-L-homocysteine + 2 H(+). Its function is as follows. Catalyzes the methylthiolation of N6-(dimethylallyl)adenosine (i(6)A), leading to the formation of 2-methylthio-N6-(dimethylallyl)adenosine (ms(2)i(6)A) at position 37 in tRNAs that read codons beginning with uridine. In Azobacteroides pseudotrichonymphae genomovar. CFP2, this protein is tRNA-2-methylthio-N(6)-dimethylallyladenosine synthase.